We begin with the raw amino-acid sequence, 589 residues long: Protein FAM117B (589 aa).

The tract at residues 1–310 (MSQRVRRNGS…RDKERQSPFH (310 aa)) is disordered. Position 10 is a phosphoserine (S10). Gly residues predominate over residues 16–29 (SLGGGAVATAGGPG). Positions 45–56 (QQQQQQHGSPTR) are enriched in low complexity. The segment covering 57-85 (SGGGGGGNNNGGCCGGASGPAGGGGGGGP) has biased composition (gly residues). The residue at position 106 (S106) is a Phosphoserine. Low complexity predominate over residues 108–136 (TVATQTGASATSTRGTSPTRSAAPGARGS). Over residues 137 to 146 (PPRPPPPPPL) the composition is skewed to pro residues. Low complexity-rich tracts occupy residues 147-158 (LGTVSSPSSSPT) and 207-220 (PSSSPSSIIRRTSS). Phosphoserine is present on residues S210, S219, S220, and S273. Residues 292 to 302 (RSKHSSRHHRD) are compositionally biased toward basic residues. S345 and S391 each carry phosphoserine. Disordered regions lie at residues 370 to 464 (QDIP…NNSY) and 556 to 589 (STNTEQDRVSRGTSTVMPSASLLPPPEPIEEAEG). A compositionally biased stretch (polar residues) spans 384–397 (QRSSSTRSIDTQTP). The segment covering 404–417 (SNNSSRSQSVSPTS) has biased composition (low complexity). A phosphoserine mark is found at S449 and S457.

In Homo sapiens (Human), this protein is Protein FAM117B (FAM117B).